Reading from the N-terminus, the 913-residue chain is Eukaryotic translation initiation factor 3 subunit C (913 aa).

The tract at residues 1–44 (MSRFFTTGSDSESESSLSGEELVTKPVGGNYGKQPLLLSEDEED) is disordered. Over residues 8 to 21 (GSDSESESSLSGEE) the composition is skewed to low complexity. Residues Ser-9, Ser-11, Ser-13, Ser-15, Ser-16, Ser-18, and Ser-39 each carry the phosphoserine modification. Lys-99 bears the N6-acetyllysine mark. 2 disordered regions span residues 157–301 (TSYK…GGEW) and 522–542 (QLTP…NEGE). 4 positions are modified to phosphoserine: Ser-166, Ser-178, Ser-181, and Ser-182. The segment covering 166-190 (SADEDAEKNEEDSEGSSDEDEDEDG) has biased composition (acidic residues). Over residues 199-216 (KKSEAPSGESRKFLKKMD) the composition is skewed to basic and acidic residues. The segment covering 217-232 (DEDEDSEDSEDDEDWD) has biased composition (acidic residues). Residues 261-278 (PTTDEDKKAAEKKREDKA) show a composition bias toward basic and acidic residues. The span at 522 to 531 (QLTPPEGSSK) shows a compositional bias: polar residues. Position 524 is a phosphothreonine (Thr-524). N6-acetyllysine is present on Lys-643. Residues 673-849 (FHLHINLELL…QTVVMHRTEP (177 aa)) enclose the PCI domain. Residues 885 to 913 (FRDQKDGYRKNEGYMRRGGYRQQQSQTAY) form a disordered region. A compositionally biased stretch (basic and acidic residues) spans 886–899 (RDQKDGYRKNEGYM). A Phosphoserine modification is found at Ser-909.

It belongs to the eIF-3 subunit C family. In terms of assembly, component of the eukaryotic translation initiation factor 3 (eIF-3) complex, which is composed of 13 subunits: EIF3A, EIF3B, EIF3C, EIF3D, EIF3E, EIF3F, EIF3G, EIF3H, EIF3I, EIF3J, EIF3K, EIF3L and EIF3M. The eIF-3 complex appears to include 3 stable modules: module A is composed of EIF3A, EIF3B, EIF3G and EIF3I; module B is composed of EIF3F, EIF3H, and EIF3M; and module C is composed of EIF3C, EIF3D, EIF3E, EIF3K and EIF3L. EIF3C of module C binds EIF3B of module A and EIF3H of module B, thereby linking the three modules. EIF3J is a labile subunit that binds to the eIF-3 complex via EIF3B. The eIF-3 complex interacts with RPS6KB1 under conditions of nutrient depletion. Mitogenic stimulation leads to binding and activation of a complex composed of MTOR and RPTOR, leading to phosphorylation and release of RPS6KB1 and binding of EIF4B to eIF-3. Interacts with ALKBH4, IFIT1 and IFIT2. Interacts with BZW2/5MP1. Post-translationally, phosphorylated. Phosphorylation is enhanced upon serum stimulation.

The protein localises to the cytoplasm. Component of the eukaryotic translation initiation factor 3 (eIF-3) complex, which is required for several steps in the initiation of protein synthesis. The eIF-3 complex associates with the 40S ribosome and facilitates the recruitment of eIF-1, eIF-1A, eIF-2:GTP:methionyl-tRNAi and eIF-5 to form the 43S pre-initiation complex (43S PIC). The eIF-3 complex stimulates mRNA recruitment to the 43S PIC and scanning of the mRNA for AUG recognition. The eIF-3 complex is also required for disassembly and recycling of post-termination ribosomal complexes and subsequently prevents premature joining of the 40S and 60S ribosomal subunits prior to initiation. The eIF-3 complex specifically targets and initiates translation of a subset of mRNAs involved in cell proliferation, including cell cycling, differentiation and apoptosis, and uses different modes of RNA stem-loop binding to exert either translational activation or repression. The protein is Eukaryotic translation initiation factor 3 subunit C of Pongo abelii (Sumatran orangutan).